A 141-amino-acid polypeptide reads, in one-letter code: ATP synthase epsilon chain (141 aa).

This sequence belongs to the ATPase epsilon chain family. In terms of assembly, F-type ATPases have 2 components, CF(1) - the catalytic core - and CF(0) - the membrane proton channel. CF(1) has five subunits: alpha(3), beta(3), gamma(1), delta(1), epsilon(1). CF(0) has three main subunits: a, b and c.

It localises to the cell inner membrane. Its function is as follows. Produces ATP from ADP in the presence of a proton gradient across the membrane. This chain is ATP synthase epsilon chain, found in Pseudomonas syringae pv. syringae (strain B728a).